The following is a 49-amino-acid chain: Single-stranded DNA-binding protein (49 aa).

As to quaternary structure, homodimer in the absence of DNA, monomer when binding DNA.

In terms of biological role, binds preferentially to single-stranded DNA and therefore, destabilizes double-stranded DNA. It is involved in DNA replication, repair and recombination. Binds ss-DNA as the replication fork advances and stimulates the replisome processivity and accuracy. This chain is Single-stranded DNA-binding protein (32), found in Enterobacteria phage RB9 (Bacteriophage RB9).